Consider the following 237-residue polypeptide: 2-C-methyl-D-erythritol 4-phosphate cytidylyltransferase (237 aa).

The protein belongs to the IspD/TarI cytidylyltransferase family. IspD subfamily.

It catalyses the reaction 2-C-methyl-D-erythritol 4-phosphate + CTP + H(+) = 4-CDP-2-C-methyl-D-erythritol + diphosphate. The protein operates within isoprenoid biosynthesis; isopentenyl diphosphate biosynthesis via DXP pathway; isopentenyl diphosphate from 1-deoxy-D-xylulose 5-phosphate: step 2/6. Its function is as follows. Catalyzes the formation of 4-diphosphocytidyl-2-C-methyl-D-erythritol from CTP and 2-C-methyl-D-erythritol 4-phosphate (MEP). The sequence is that of 2-C-methyl-D-erythritol 4-phosphate cytidylyltransferase from Clostridioides difficile (strain 630) (Peptoclostridium difficile).